A 260-amino-acid polypeptide reads, in one-letter code: MARPGMERWRDRLALVTGASGGIGAAVARALVQQGLKVVGCARTVGNIEELAAECKSAGYPGTLIPYRCDLSNEEDILSMFSAIRSQHSGVDICINNAGLARPDTLLSGSTSGWKDMFNVNVLALSICTREAYQSMKERNVDDGHIININSMSGHRVLPLSVTHFYSATKYAVTALTEGLRQELREAQTHIRATCISPGVVETQFAFKLHDKDPEKAAATYEQMKCLKPEDVAEAVIYVLSTPAHIQIGDIQMRPTEQVT.

The first 30 residues, 1 to 30, serve as a signal peptide directing secretion; that stretch reads MARPGMERWRDRLALVTGASGGIGAAVARA. NADP(+)-binding positions include 18 to 23, 43 to 44, Glu49, 70 to 71, and Asn97; these read GASGGI, RT, and DL. Substrate contacts are provided by Ser151 and Tyr166. NADP(+)-binding positions include Tyr166, Lys170, 201–204, and Lys208; that span reads VETQ. Residue Tyr166 is the Proton acceptor of the active site.

It belongs to the short-chain dehydrogenases/reductases (SDR) family. As to quaternary structure, homotetramer. In terms of tissue distribution, isoform 1: Ubiquitously expressed, with highest levels in testis, small intestine, colon, kidney, brain and heart. Isoform 3: Expressed in brain, heart and skeletal muscle.

It is found in the secreted. The catalysed reaction is a 3beta-hydroxysteroid + NADP(+) = a 3-oxosteroid + NADPH + H(+). The enzyme catalyses 17beta-estradiol + NAD(+) = estrone + NADH + H(+). It catalyses the reaction 17beta-estradiol + NADP(+) = estrone + NADPH + H(+). The protein operates within steroid biosynthesis; estrogen biosynthesis. Inhibited by flavonoids including apigenin, luteolin, genistein, kaempferol and quercetin and also by carbenoxolone, zearalenone, glycyrrhetinic, curcumin and flufenamic acid. Catalyzes the conversion of the 17-keto group of estrone, 4- and 5-androstenes and 5-alpha-androstanes into their 17-beta-hydroxyl metabolites and the conversion of the 3-keto group of 3-, 3,17- and 3,20- diketosteroids into their 3-hydroxyl metabolites. Exhibits reductive 3-beta-hydroxysteroid dehydrogenase activity toward 5-beta-androstanes, 5-beta-pregnanes, 4-pregnenes and bile acids. May also reduce endogenous and exogenous alpha-dicarbonyl compounds and xenobiotic alicyclic ketones. In Homo sapiens (Human), this protein is Dehydrogenase/reductase SDR family member 11 (DHRS11).